Here is a 253-residue protein sequence, read N- to C-terminus: Phosphate import ATP-binding protein PstB (253 aa).

The ABC transporter domain occupies Ile-7–Ile-248. Gly-39–Ser-46 lines the ATP pocket.

This sequence belongs to the ABC transporter superfamily. Phosphate importer (TC 3.A.1.7) family. As to quaternary structure, the complex is composed of two ATP-binding proteins (PstB), two transmembrane proteins (PstC and PstA) and a solute-binding protein (PstS).

Its subcellular location is the cell membrane. The enzyme catalyses phosphate(out) + ATP + H2O = ADP + 2 phosphate(in) + H(+). In terms of biological role, part of the ABC transporter complex PstSACB involved in phosphate import. Responsible for energy coupling to the transport system. This chain is Phosphate import ATP-binding protein PstB, found in Methanothermobacter thermautotrophicus (strain ATCC 29096 / DSM 1053 / JCM 10044 / NBRC 100330 / Delta H) (Methanobacterium thermoautotrophicum).